The sequence spans 84 residues: Large ribosomal subunit protein bL27 (84 aa).

Residues 1-21 are disordered; that stretch reads MAHKKGQGSTRNGRDSHSKRL. Over residues 12–21 the composition is skewed to basic and acidic residues; sequence NGRDSHSKRL.

It belongs to the bacterial ribosomal protein bL27 family.

The chain is Large ribosomal subunit protein bL27 from Methylacidiphilum infernorum (isolate V4) (Methylokorus infernorum (strain V4)).